We begin with the raw amino-acid sequence, 483 residues long: Glutamyl-tRNA(Gln) amidotransferase subunit A (483 aa).

Active-site charge relay system residues include lysine 75 and serine 150. Residue serine 174 is the Acyl-ester intermediate of the active site.

This sequence belongs to the amidase family. GatA subfamily. As to quaternary structure, heterotrimer of A, B and C subunits.

The enzyme catalyses L-glutamyl-tRNA(Gln) + L-glutamine + ATP + H2O = L-glutaminyl-tRNA(Gln) + L-glutamate + ADP + phosphate + H(+). Functionally, allows the formation of correctly charged Gln-tRNA(Gln) through the transamidation of misacylated Glu-tRNA(Gln) in organisms which lack glutaminyl-tRNA synthetase. The reaction takes place in the presence of glutamine and ATP through an activated gamma-phospho-Glu-tRNA(Gln). The protein is Glutamyl-tRNA(Gln) amidotransferase subunit A of Microcystis aeruginosa (strain NIES-843 / IAM M-2473).